A 317-amino-acid chain; its full sequence is Acetyl-coenzyme A carboxylase carboxyl transferase subunit alpha (317 aa).

The 262-residue stretch at 31–292 (RFEPELAQLE…DKALWATLTS (262 aa)) folds into the CoA carboxyltransferase C-terminal domain.

This sequence belongs to the AccA family. In terms of assembly, acetyl-CoA carboxylase is a heterohexamer composed of biotin carboxyl carrier protein (AccB), biotin carboxylase (AccC) and two subunits each of ACCase subunit alpha (AccA) and ACCase subunit beta (AccD).

Its subcellular location is the cytoplasm. The catalysed reaction is N(6)-carboxybiotinyl-L-lysyl-[protein] + acetyl-CoA = N(6)-biotinyl-L-lysyl-[protein] + malonyl-CoA. The protein operates within lipid metabolism; malonyl-CoA biosynthesis; malonyl-CoA from acetyl-CoA: step 1/1. Its function is as follows. Component of the acetyl coenzyme A carboxylase (ACC) complex. First, biotin carboxylase catalyzes the carboxylation of biotin on its carrier protein (BCCP) and then the CO(2) group is transferred by the carboxyltransferase to acetyl-CoA to form malonyl-CoA. This Sorangium cellulosum (strain So ce56) (Polyangium cellulosum (strain So ce56)) protein is Acetyl-coenzyme A carboxylase carboxyl transferase subunit alpha.